The sequence spans 1616 residues: MAHIQQSMQGALLDTVRGQNSLVNDLAKRRLYDTAVEEFNAKDRRPKINFSKSINEEQTLIVSQAYPEFQITFYNTQLAVHSLAAGLRSLELEYLMMQVPYGSLTYDIGGNFAAHLFKGRDYVHCCMPNLDLRDIMRHENQKDSVATYLSRLKARNKVLPAFQQEAFQRYSERSDEVVCNNTFQCCESNRYSSGGRVYAISLHSLYDIPADELGAALLRKNVHTLYAAFHFAEELLLEVSTVELPTIGGIFSRDGDKINFCFSNESTLNYSHSYSNLLKYVCKTYFPASNRFVYMKEFLITRVNTWFCKFTKLDTYTLYRGVYHRGCDQQEFYSAMEDAWHYKKTLAMLNSERIVLEDHSSVNYWFPKMKDMVIVPLFDVSLETQKRTKKEVIVSKDFVYTVLNHIRTYQAKALTYNNVLSFVESIRSRVIINGVTARSEWDVDKALLQSMAMTFFLITKLSMLKDELLVSKFTLSAKSVHEHVWDEIKRGCGNMFPSLKESLLRKKLISGSAEELEIEVPDMYVTFHDRFVAEYKASVEMPTIDISKDLSEAESYYSALSELSVLENSKDFDLEKFSRMCAINCVNPDIAAKIVVAVLSNESGVTLPFKEPTEGNMAEAMKSGEKDEVLTLGSQTDNTDLTSKSMVISGSLPLCGIASEISCDTFVRNEEINSLEEYHMLAAESVISNKMASIVYSGPLQVQQMQNYVDSLAASLSATVSNLKKLVKDSSVGFQDSLSKVGVFDVRKKMWLIKPTLKNHSWGVVQKFDGKCFLALLSYHNELPICDADWSKVAVSNESMVYSDMAKLRVLRKSIGEMPISVSSAKVTLVDGVPGCGKTKEILRRVNFSEDLVLVPGKEAAAMIRKRANQSGNIVANNDNVKTVDSFLMNLGKGPVCQFKRLFVDEGLMLHPGCVYFLVKLSLCNEAFVFGDTQQIPYINRVQNFPFPQHFSKLIVDETEKRRTTLRCPVDVTHFLNQCYDGAVTTTSKTQRSVGLEVVGGAAVMNPVTKPLKGKIVTFTQSDKLTMLSRGYQDVNTVHEIQGETYEEVSLVRLTPTPIHIISRESPHVLVGLTRHTRCFKYYTVVLDPLVKLVRDLECVSNFLLDVYMVDSVSAXQLQVSGVYLAENLFVQAPKSGDAQDLQFYYDKCLPGNSTVLNEFDAVTMNCSDISLNVKDCVLDFSKSVPLPRDNTKVPMTPVIRTAAERPRSQGLLENLVAMIKRNFNSPELSGTVDMENTASVVADRFFDSYFLKDKLSGCSLGDSGGKNIIDRQALIRWMEKQEKSTIGQLADYDFVDLPAIDQYRHIIKSQPKQKLDLSIQSEYPSLQTIVYHSKKINALFGPIFSELTRQMLSAIDTSRYLFFTRKTPEQIEEFFSDLDAHQPMEVLELDVSKYDKSQNEFHCAVEYEIWKRLGIDEFLAEVWKQGHRKTTLKDYTAGIKTCLWYQRKSGDVTTFIGNTVIIAACMASMLPMEKVIKAAFCGDDSLVYLPKGCELPNIQSCANLMWNFEAKLFKKTYGYFCGRYVIHHDRGAIVYVDPLKIISKLGAKHITDKEHLEEFRISLADVSKSLNNCAYYAQLDEAVREVHKTAPPGSFVYKCIVKFLSNRVLFESLFF.

The tract at residues 50 to 466 is methyltransferase; that stretch reads FSKSINEEQT…LITKLSMLKD (417 aa). One can recognise an Alphavirus-like MT domain in the interval 72-281; that stretch reads TFYNTQLAVH…HSYSNLLKYV (210 aa). Residues 800–962 form the (+)RNA virus helicase ATP-binding domain; that stretch reads MVYSDMAKLR…KLIVDETEKR (163 aa). Residues 828-1084 are helicase; that stretch reads TLVDGVPGCG…RHTRCFKYYT (257 aa). 832–839 provides a ligand contact to ATP; the sequence is GVPGCGKT. The (+)RNA virus helicase C-terminal domain occupies 963-1115; the sequence is RTTLRCPVDV…DVYMVDSVSA (153 aa). The RdRp catalytic domain occupies 1385-1498; that stretch reads MEVLELDVSK…YLPKGCELPN (114 aa).

This sequence belongs to the ssRNA positive-strand viruses RNA-directed RNA polymerase family. As to quaternary structure, heterodimer of a large and a small subunit.

It carries out the reaction RNA(n) + a ribonucleoside 5'-triphosphate = RNA(n+1) + diphosphate. It catalyses the reaction ATP + H2O = ADP + phosphate + H(+). Its function is as follows. Is an RNA-dependent RNA polymerase active in viral RNA replication. In terms of biological role, is a methyltransferase active in RNA capping and an RNA helicase. Methyltransferase displays a cytoplasmic capping enzyme activity. This function is necessary since all viral RNAs are synthesized in the cytoplasm, and host capping enzymes are restricted to the nucleus. Helicase region probably exhibits NTPase and RNA unwinding activities (Potential). It also acts as a suppressor of RNA-mediated gene silencing, also known as post-transcriptional gene silencing (PTGS), a mechanism of plant viral defense that limits the accumulation of viral RNAs. May mediate silencing suppression through either inhibition of HEN1-mediated siRNA or siRNA demethylation. The polypeptide is Replicase large subunit (Tobamovirus Ob).